Here is a 342-residue protein sequence, read N- to C-terminus: S-adenosylmethionine:tRNA ribosyltransferase-isomerase (342 aa).

The protein belongs to the QueA family. As to quaternary structure, monomer.

The protein resides in the cytoplasm. It carries out the reaction 7-aminomethyl-7-carbaguanosine(34) in tRNA + S-adenosyl-L-methionine = epoxyqueuosine(34) in tRNA + adenine + L-methionine + 2 H(+). It participates in tRNA modification; tRNA-queuosine biosynthesis. Transfers and isomerizes the ribose moiety from AdoMet to the 7-aminomethyl group of 7-deazaguanine (preQ1-tRNA) to give epoxyqueuosine (oQ-tRNA). This Campylobacter jejuni (strain RM1221) protein is S-adenosylmethionine:tRNA ribosyltransferase-isomerase.